The primary structure comprises 314 residues: Lipid A biosynthesis acyltransferase 2 (314 aa).

A helical membrane pass occupies residues 17–37 (LSPVYWFTWFVLGMIAGISMF). The short motif at 137–142 (HGWSVD) is the HXXXXD motif element.

Belongs to the LpxL/LpxM/LpxP family. LpxM subfamily.

The protein resides in the cell inner membrane. It carries out the reaction an alpha-Kdo-(2-&gt;4)-alpha-Kdo-(2-&gt;6)-(acyl)-lipid IVA + a fatty acyl-[ACP] = an alpha-Kdo-(2-&gt;4)-alpha-Kdo-(2-&gt;6)-lipid A + holo-[ACP]. It participates in glycolipid biosynthesis; KDO(2)-lipid A biosynthesis; KDO(2)-lipid A from CMP-3-deoxy-D-manno-octulosonate and lipid IV(A): step 4/4. Its pathway is bacterial outer membrane biogenesis; lipopolysaccharide biosynthesis. Catalyzes the transfer of an acyl chain from an acyl-[acyl-carrier-protein] (ACP) to a Kdo(2)-(acyl)-lipid IV(A) to form a Kdo(2)-lipid A. The sequence is that of Lipid A biosynthesis acyltransferase 2 from Shigella flexneri.